A 63-amino-acid polypeptide reads, in one-letter code: MPIAQLYILEGRSDEQKETLIREVSEAMSRSLDAPIERVRVIITEMPKNHFGIGGEPASKLNR.

The active-site Proton acceptor; via imino nitrogen is the proline 2.

The protein belongs to the 4-oxalocrotonate tautomerase family. Homohexamer.

The enzyme catalyses (2Z,4E)-2-hydroxyhexa-2,4-dienedioate = (3E)-2-oxohex-3-enedioate. It participates in aromatic compound metabolism; salicylate degradation. Catalyzes the ketonization of 2-hydroxymuconate stereoselectively to yield 2-oxo-3-hexenedioate. This is 2-hydroxymuconate tautomerase (nahJ) from Pseudomonas putida (Arthrobacter siderocapsulatus).